We begin with the raw amino-acid sequence, 196 residues long: MTENTHAGRLIVLTGPTAVGKGTVEAKLRADHPEVWVSVSATTRAPRPGEVDGVNYWFLTEDEFLAREAAGEFLETAVVHGMAHYGTLLKPVEEHLAAGVPTILEIDLQGARRVKQRAAELDLEVVYVFIAPPSFEELERRLIGRGTETAEQQARRLETAKVELAAESEFDVTIVNETVDQAAADLWSVIAKEYGL.

Residues 8–191 form the Guanylate kinase-like domain; it reads GRLIVLTGPT…AAADLWSVIA (184 aa). 15–22 serves as a coordination point for ATP; the sequence is GPTAVGKG.

Belongs to the guanylate kinase family.

The protein localises to the cytoplasm. The catalysed reaction is GMP + ATP = GDP + ADP. Functionally, essential for recycling GMP and indirectly, cGMP. The polypeptide is Guanylate kinase (Bifidobacterium longum (strain NCC 2705)).